The primary structure comprises 171 residues: N5-carboxyaminoimidazole ribonucleotide mutase (171 aa).

Residues S13, D16, and R43 each coordinate substrate.

This sequence belongs to the AIR carboxylase family. Class I subfamily.

It catalyses the reaction 5-carboxyamino-1-(5-phospho-D-ribosyl)imidazole + H(+) = 5-amino-1-(5-phospho-D-ribosyl)imidazole-4-carboxylate. The protein operates within purine metabolism; IMP biosynthesis via de novo pathway; 5-amino-1-(5-phospho-D-ribosyl)imidazole-4-carboxylate from 5-amino-1-(5-phospho-D-ribosyl)imidazole (N5-CAIR route): step 2/2. Its function is as follows. Catalyzes the conversion of N5-carboxyaminoimidazole ribonucleotide (N5-CAIR) to 4-carboxy-5-aminoimidazole ribonucleotide (CAIR). The chain is N5-carboxyaminoimidazole ribonucleotide mutase from Mycobacterium leprae (strain TN).